The following is a 638-amino-acid chain: Methylmalonyl-CoA mutase small subunit (638 aa).

Residues 1–11 (MSSTDQGTNPA) are compositionally biased toward polar residues. The tract at residues 1–34 (MSSTDQGTNPADTDDLTPTTLSLAGDFPKATEEQ) is disordered.

Belongs to the methylmalonyl-CoA mutase family. As to quaternary structure, heterodimer of an alpha and a beta chain. Requires adenosylcob(III)alamin as cofactor.

The catalysed reaction is (R)-methylmalonyl-CoA = succinyl-CoA. Its pathway is metabolic intermediate metabolism; propanoyl-CoA degradation; succinyl-CoA from propanoyl-CoA: step 3/3. In terms of biological role, catalyzes the isomerization of succinyl-CoA to methylmalonyl-CoA during synthesis of propionate from tricarboxylic acid-cycle intermediates. This chain is Methylmalonyl-CoA mutase small subunit (mutA), found in Propionibacterium freudenreichii subsp. shermanii.